Here is a 340-residue protein sequence, read N- to C-terminus: Myomesin-1 (340 aa).

Residues 177–212 (AEKARLKSRPSAPXTGQIIVTEEEPSEEAGTENXQR) are disordered. Acidic residues predominate over residues 197–206 (TEEEPSEEAG).

As to quaternary structure, homodimer. Interacts with TTN/titin and PNKD. Seems to be expressed in all cardiac and skeletal fibers.

The protein resides in the cytoplasm. Its subcellular location is the myofibril. The protein localises to the sarcomere. It is found in the m line. Functionally, major component of the vertebrate myofibrillar M band. Binds myosin, titin, and light meromyosin. This binding is dose dependent. This chain is Myomesin-1 (MYOM1), found in Bos taurus (Bovine).